A 201-amino-acid chain; its full sequence is ATP-dependent Clp protease proteolytic subunit (201 aa).

Catalysis depends on serine 103, which acts as the Nucleophile. Histidine 128 is a catalytic residue.

It belongs to the peptidase S14 family. As to quaternary structure, fourteen ClpP subunits assemble into 2 heptameric rings which stack back to back to give a disk-like structure with a central cavity, resembling the structure of eukaryotic proteasomes.

The protein resides in the cytoplasm. The enzyme catalyses Hydrolysis of proteins to small peptides in the presence of ATP and magnesium. alpha-casein is the usual test substrate. In the absence of ATP, only oligopeptides shorter than five residues are hydrolyzed (such as succinyl-Leu-Tyr-|-NHMec, and Leu-Tyr-Leu-|-Tyr-Trp, in which cleavage of the -Tyr-|-Leu- and -Tyr-|-Trp bonds also occurs).. Its function is as follows. Cleaves peptides in various proteins in a process that requires ATP hydrolysis. Has a chymotrypsin-like activity. Plays a major role in the degradation of misfolded proteins. The polypeptide is ATP-dependent Clp protease proteolytic subunit (Bordetella avium (strain 197N)).